A 456-amino-acid polypeptide reads, in one-letter code: Solute carrier family 49 member 4 homolog (456 aa).

The Cytoplasmic segment spans residues 1 to 29 (MGLEWSSPGERQPLLFPGGPRSPRVFGRR). The Di-leucine motif; mediates lysosomal localization signature appears at 14 to 15 (LL). The chain crosses the membrane as a helical span at residues 30–50 (WLVLLLFSVLAFLQGLVWNSW). At 51–67 (GPIQISARTAYKFSGLD) the chain is on the lumenal side. The helical transmembrane segment at 68–88 (IALLVLWGPIGFLPCFLFMWL) threads the bilayer. The Cytoplasmic portion of the chain corresponds to 89 to 95 (MDNRGLR). Residues 96–116 (ITVLLTALLMVLGAGLRCVPV) traverse the membrane as a helical segment. Over 117 to 123 (EDLAIRR) the chain is Lumenal. The chain crosses the membrane as a helical span at residues 124–144 (ILIHGGQLLNGFAGPTVMNAA). Residues 145-162 (PFLSTTWFAPDERATATA) lie on the Cytoplasmic side of the membrane. Residues 163–183 (IASMLNYLGGACAFLVGPLVV) form a helical membrane-spanning segment. At 184–207 (PAPNSTSGLLLYSGSTDAIKDRIE) the chain is on the lumenal side. N-linked (GlcNAc...) asparagine glycosylation occurs at Asn187. A helical transmembrane segment spans residues 208–228 (AVMYAEFGIIFVVFAAILAYF). Residues 229 to 259 (PARPPVPPSVAAASRRLSYRTSIFRLLSNLR) lie on the Cytoplasmic side of the membrane. The helical transmembrane segment at 260 to 280 (FLLIVLAYAIPLGFYSGWIGV) threads the bilayer. Residues 281–292 (LDLILTPVHVTQ) lie on the Lumenal side of the membrane. Residues 293-313 (VDAGWVGFWSIVGGCVVGIAV) traverse the membrane as a helical segment. Residues 314-326 (GRFADSIRGVLKP) lie on the Cytoplasmic side of the membrane. The chain crosses the membrane as a helical span at residues 327–347 (ILLLLFSGATLSATWFTLTFL). At 348–362 (SNVTHLPLTTATLYT) the chain is on the lumenal side. A glycan (N-linked (GlcNAc...) asparagine) is linked at Asn349. Residues 363–383 (SCILIGVFLNGTVPIFFELFV) traverse the membrane as a helical segment. Residues 384-392 (ETVYPIPEG) are Cytoplasmic-facing. A helical membrane pass occupies residues 393–413 (IACGVVTFLSNIFMGVLLVFL). Residues 414–420 (TMYQMEL) are Lumenal-facing. Residues 421–441 (SWLNWCLTGSCFLSLFFIACF) form a helical membrane-spanning segment. The Cytoplasmic segment spans residues 442 to 456 (RESYDRLYLDVFVSV).

The protein belongs to the major facilitator superfamily.

The protein localises to the lysosome membrane. The catalysed reaction is pyridoxine(out) + n H(+)(out) = pyridoxine(in) + n H(+)(in). Functionally, mediates H(+)-dependent pyridoxine transport. This Xenopus laevis (African clawed frog) protein is Solute carrier family 49 member 4 homolog (slc49a4).